The primary structure comprises 156 residues: Small ribosomal subunit protein uS7 (156 aa).

This sequence belongs to the universal ribosomal protein uS7 family. As to quaternary structure, part of the 30S ribosomal subunit. Contacts proteins S9 and S11.

Functionally, one of the primary rRNA binding proteins, it binds directly to 16S rRNA where it nucleates assembly of the head domain of the 30S subunit. Is located at the subunit interface close to the decoding center, probably blocks exit of the E-site tRNA. The protein is Small ribosomal subunit protein uS7 of Lactobacillus acidophilus (strain ATCC 700396 / NCK56 / N2 / NCFM).